We begin with the raw amino-acid sequence, 193 residues long: ATP-dependent Clp protease proteolytic subunit (193 aa).

The active-site Nucleophile is the S98. Residue H123 is part of the active site.

Belongs to the peptidase S14 family. As to quaternary structure, fourteen ClpP subunits assemble into 2 heptameric rings which stack back to back to give a disk-like structure with a central cavity, resembling the structure of eukaryotic proteasomes.

It localises to the cytoplasm. It carries out the reaction Hydrolysis of proteins to small peptides in the presence of ATP and magnesium. alpha-casein is the usual test substrate. In the absence of ATP, only oligopeptides shorter than five residues are hydrolyzed (such as succinyl-Leu-Tyr-|-NHMec, and Leu-Tyr-Leu-|-Tyr-Trp, in which cleavage of the -Tyr-|-Leu- and -Tyr-|-Trp bonds also occurs).. Functionally, cleaves peptides in various proteins in a process that requires ATP hydrolysis. Has a chymotrypsin-like activity. Plays a major role in the degradation of misfolded proteins. The polypeptide is ATP-dependent Clp protease proteolytic subunit (Lachnospira eligens (strain ATCC 27750 / DSM 3376 / VPI C15-48 / C15-B4) (Eubacterium eligens)).